A 191-amino-acid polypeptide reads, in one-letter code: Probable molybdenum cofactor guanylyltransferase (191 aa).

GTP-binding positions include 6–8 (LAG), Lys18, Asp67, and Asp92. Asp92 is a binding site for Mg(2+).

Belongs to the MobA family. Requires Mg(2+) as cofactor.

The protein localises to the cytoplasm. The enzyme catalyses Mo-molybdopterin + GTP + H(+) = Mo-molybdopterin guanine dinucleotide + diphosphate. Transfers a GMP moiety from GTP to Mo-molybdopterin (Mo-MPT) cofactor (Moco or molybdenum cofactor) to form Mo-molybdopterin guanine dinucleotide (Mo-MGD) cofactor. The sequence is that of Probable molybdenum cofactor guanylyltransferase from Thermococcus gammatolerans (strain DSM 15229 / JCM 11827 / EJ3).